Consider the following 315-residue polypeptide: MADGDSGSERGGGGPGSFQPAPRGGGGPGGEQETQELASKRLDIQNKRFYLDVKQNAKGRFLKIAEVGAGGSKSRLTLSMAVAAEFRDSLGDFIEHYAQLGPSSPEQLAAGAEEGGGPRRALKSEFLVRENRKYYLDLKENQRGRFLRIRQTVNRGGGGFGGGPGPGGLQSGQTIALPAQGLIEFRDALAKLIDDYGGEDDELAGGPGGGAGGPGGGLYGELPEGTSITVDSKRFFFDVGCNKYGVFLRVSEVKPSYRNAITVPFKAWGKFGGAFCRYADEMKEIQERQRDKLYERRGGGSGGGDESEGEEVDED.

A disordered region spans residues 1–39; it reads MADGDSGSERGGGGPGSFQPAPRGGGGPGGEQETQELAS. At A2 the chain carries N-acetylalanine. A phosphoserine mark is found at S6 and S8. R23 is modified (omega-N-methylarginine). The segment at 28 to 254 is DNA-binding; sequence PGGEQETQEL…GVFLRVSEVK (227 aa). T34 is subject to Phosphothreonine. At S104 the chain carries Phosphoserine. R155 is modified (omega-N-methylarginine). The tract at residues 200-220 is disordered; that stretch reads DDELAGGPGGGAGGPGGGLYG. Residues 205–219 are compositionally biased toward gly residues; it reads GGPGGGAGGPGGGLY. N6-acetyllysine is present on K270. The span at 288 to 298 shows a compositional bias: basic and acidic residues; sequence RQRDKLYERRG. Positions 288-315 are disordered; it reads RQRDKLYERRGGGSGGGDESEGEEVDED. Residue R297 is modified to Omega-N-methylarginine. Phosphoserine is present on residues S301 and S307. Over residues 305–315 the composition is skewed to acidic residues; sequence DESEGEEVDED.

Belongs to the PUR DNA-binding protein family. As to quaternary structure, homodimer, heterodimer with PURA and heterotrimer with PURA and YBX1/Y-box protein 1. Interacts with MYOCD and SRF. As to expression, expressed in muscle cells and in the liver.

Its subcellular location is the nucleus. Its function is as follows. Transcriptional regulator which can act as an activator or a repressor. Represses the transcription of ACTA2 in fibroblasts and smooth muscle cells via its ability to interact with the purine-rich strand of a MCAT- containing element in the 5' flanking region of the gene. Represses the transcription of MYOCD, capable of repressing all isoforms of MYOCD but the magnitude of the repressive effects is most notable for the SMC- specific isoforms. Promotes hepatic glucose production by activating the transcription of ADCY6, leading to cAMP accumulation, increased PKA activity, CREB activation, and increased transcription of PCK1 and G6PC genes. Has capacity to bind repeated elements in single-stranded DNA such as the purine-rich single strand of the PUR element located upstream of the MYC gene. Participates in transcriptional and translational regulation of alpha-MHC expression in cardiac myocytes by binding to the purine-rich negative regulatory (PNR) element. Modulates constitutive liver galectin-3 gene transcription by binding to its promoter. May play a role in the dendritic transport of a subset of mRNAs. The protein is Transcriptional regulator protein Pur-beta (Purb) of Rattus norvegicus (Rat).